The primary structure comprises 116 residues: Vesicle-associated membrane protein 2 (116 aa).

Positions 1 to 33 (MSATAATAPPAAPAGEGGPPAPPPNLTSNRRLQ) are disordered. S2 is subject to N-acetylserine. The Cytoplasmic portion of the chain corresponds to 2 to 94 (SATAATAPPA…KRKYWWKNLK (93 aa)). In terms of domain architecture, v-SNARE coiled-coil homology spans 31 to 91 (RLQQTQAQVD…AKLKRKYWWK (61 aa)). A required for interaction with SEPT8 region spans residues 92-116 (NLKMMIILGVICAIILIIIIVYFSS). Residues 95-114 (MMIILGVICAIILIIIIVYF) form a helical; Anchor for type IV membrane protein membrane-spanning segment. Residues 115–116 (SS) lie on the Vesicular side of the membrane.

The protein belongs to the synaptobrevin family. In terms of assembly, part of the SNARE core complex containing SNAP25, VAMP2 and STX1A; this complex constitutes the basic catalytic machinery of the complex neurotransmitter release apparatus. Recruited to the SNARE complex following binding of the SNARE complex component STX1A to STXBP1. This complex binds to CPLX1. Interacts with POPDC1 and STX4. Interacts with VAPA and VAPB. Interacts with WDFY2, PRKCZ and PRKCI. Forms a complex with WDFY2 and PRKCZ. Interacts (via N-terminus) with KCNB1 (via N-terminus and C-terminus); stimulates the channel inactivation rate of KCNB1. Interacts with SEPT8; the interaction inhibits interaction of VAMP2 with SYP. Interacts with SYP; the interaction is inhibited by interaction with SEPT8. Interacts with PICALM. Interacts with alpha-synuclein/SNCA. Interacts with STX3. In terms of processing, phosphorylated by PRKCZ in vitro and this phosphorylation is increased in the presence of WDFY2.

It is found in the cytoplasmic vesicle. It localises to the secretory vesicle. The protein localises to the synaptic vesicle membrane. Its subcellular location is the cell membrane. Involved in the targeting and/or fusion of transport vesicles to their target membrane. Major SNARE protein of synaptic vesicles which mediates fusion of synaptic vesicles to release neurotransmitters. Essential for fast vesicular exocytosis and activity-dependent neurotransmitter release as well as fast endocytosis that mediates rapid reuse of synaptic vesicles. Modulates the gating characteristics of the delayed rectifier voltage-dependent potassium channel KCNB1. The chain is Vesicle-associated membrane protein 2 (VAMP2) from Bos taurus (Bovine).